Reading from the N-terminus, the 693-residue chain is Elongation factor G (693 aa).

The region spanning 8–283 (NRCRNIGIMA…AVVDYLPSPL (276 aa)) is the tr-type G domain. Residues 17 to 24 (AHIDAGKT), 81 to 85 (DTPGH), and 135 to 138 (NKMD) contribute to the GTP site.

It belongs to the TRAFAC class translation factor GTPase superfamily. Classic translation factor GTPase family. EF-G/EF-2 subfamily.

The protein resides in the cytoplasm. Catalyzes the GTP-dependent ribosomal translocation step during translation elongation. During this step, the ribosome changes from the pre-translocational (PRE) to the post-translocational (POST) state as the newly formed A-site-bound peptidyl-tRNA and P-site-bound deacylated tRNA move to the P and E sites, respectively. Catalyzes the coordinated movement of the two tRNA molecules, the mRNA and conformational changes in the ribosome. The protein is Elongation factor G of Acidobacterium capsulatum (strain ATCC 51196 / DSM 11244 / BCRC 80197 / JCM 7670 / NBRC 15755 / NCIMB 13165 / 161).